A 453-amino-acid polypeptide reads, in one-letter code: Ankyrin repeat and SOCS box protein 16 (453 aa).

7 ANK repeats span residues 56–85, 110–139, 142–171, 175–204, 209–238, 242–279, and 283–312; these read CRDP…AANM, KQTA…ELDA, GGRA…KANV, EGMT…SVNV, SEVT…DVAL, QGET…DPQA, and KRHT…SPGV. The SOCS box domain maps to 397–453; that stretch reads FYSSALSMENQPRQLQHLARLAVRAQLGSHCRQAAAQLPLPPLLRDYLLLGVEGRIQ.

This sequence belongs to the ankyrin SOCS box (ASB) family.

The protein operates within protein modification; protein ubiquitination. May be a substrate-recognition component of a SCF-like ECS (Elongin-Cullin-SOCS-box protein) E3 ubiquitin-protein ligase complex which mediates the ubiquitination and subsequent proteasomal degradation of target proteins. This Mus musculus (Mouse) protein is Ankyrin repeat and SOCS box protein 16 (Asb16).